A 1007-amino-acid polypeptide reads, in one-letter code: Sal-like protein 2 (1007 aa).

The tract at residues 1-33 is disordered; that stretch reads MSRRKQRKPQQLISDCEGPSASENGDASEEDHP. A C2H2-type 1; atypical zinc finger spans residues 34-56; that stretch reads QVCAKCCAQFTDPTEFLAHQNAC. 4 disordered regions span residues 59 to 121, 137 to 177, 220 to 243, and 286 to 306; these read DPPV…GEES, GGGL…SGHL, PASP…PLFS, and PFSA…SPAL. Positions 70-80 are enriched in low complexity; sequence ENPNNSSASSE. Polar residues predominate over residues 99 to 108; the sequence is PPDSGSSVPT. The span at 151–171 shows a compositional bias: pro residues; it reads PLPPESTPAPPPPPPPPPPPG. S243 carries the phosphoserine modification. 2 C2H2-type zinc fingers span residues 373–395 and 401–423; these read HKCR…LRSH and YKCN…FHRH. Disordered stretches follow at residues 520–540 and 610–629; these read KNKA…SGVA and AASG…ASSG. 3 consecutive C2H2-type zinc fingers follow at residues 631 to 653, 659 to 681, and 691 to 713; these read NQCV…YGQH, FKCK…FVGH, and NSCP…VRMH. A disordered region spans residues 714–886; the sequence is LGGQIPNGGT…SALTPEGEAT (173 aa). Positions 734-744 are enriched in polar residues; that stretch reads ENGSEQSTVSG. Positions 747 to 757 are enriched in low complexity; that stretch reads SFPQQQSQQPS. A compositionally biased stretch (acidic residues) spans 758–782; it reads PEEELSEEEEEEDEEEEEDVTDEDS. S797, S802, and S806 each carry phosphoserine. Residues 803–812 are compositionally biased toward acidic residues; the sequence is EEASGAEEEV. Basic and acidic residues predominate over residues 862–871; it reads GKEEGGKPER. K911 participates in a covalent cross-link: Glycyl lysine isopeptide (Lys-Gly) (interchain with G-Cter in ubiquitin). 2 consecutive C2H2-type zinc fingers follow at residues 911 to 933 and 940 to 963; these read KACE…QKTH and FTCV…LLAH.

It belongs to the sal C2H2-type zinc-finger protein family. As to expression, highest levels in adult brain (in different areas). Lower levels in heart; very low levels in kidney and pancreas. Expressed throughout the retina and lens vesicle as well as the periocular mesenchyme.

The protein resides in the nucleus. Functionally, probable transcription factor that plays a role in eye development before, during, and after optic fissure closure. The chain is Sal-like protein 2 (SALL2) from Homo sapiens (Human).